Here is a 382-residue protein sequence, read N- to C-terminus: Cell division protein DivIB (382 aa).

At 1 to 103 the chain is on the cytoplasmic side; it reads MAKDKEKQSD…SATQIAFQKS (103 aa). Composition is skewed to basic and acidic residues over residues 36-49 and 60-70; these read EKKL…DKKA and VELKTDEKTDS. The segment at 36 to 92 is disordered; that stretch reads EKKLKEKLLSDKKAQQQAQNASEAVELKTDEKTDSQEIESETTSKPKKTKKVRQPKE. The chain crosses the membrane as a helical span at residues 104–124; it reads LPVLLGALLLMAVSIFMITPY. The region spanning 125–196 is the POTRA domain; it reads SKKKEFSVRG…NHFLFNVIEF (72 aa). Topologically, residues 125-382 are extracellular; it reads SKKKEFSVRG…PETVLEQAHG (258 aa). Positions 322–382 are disordered; it reads QEIENQPEVP…PETVLEQAHG (61 aa). Over residues 338 to 352 the composition is skewed to basic and acidic residues; sequence AADKEGDKPGEHQEQ.

Belongs to the FtsQ/DivIB family. DivIB subfamily.

It is found in the cell membrane. Its function is as follows. Cell division protein that may be involved in stabilizing or promoting the assembly of the division complex. This is Cell division protein DivIB from Streptococcus pyogenes serotype M2 (strain MGAS10270).